Consider the following 331-residue polypeptide: Adenosine deaminase (331 aa).

Zn(2+)-binding residues include His12 and His14. His14, Asp16, and Gly170 together coordinate substrate. Residue His197 participates in Zn(2+) binding. The Proton donor role is filled by Glu200. Position 278 (Asp278) interacts with Zn(2+). Asp279 serves as a coordination point for substrate.

The protein belongs to the metallo-dependent hydrolases superfamily. Adenosine and AMP deaminases family. Adenosine deaminase subfamily. Requires Zn(2+) as cofactor.

It carries out the reaction adenosine + H2O + H(+) = inosine + NH4(+). It catalyses the reaction 2'-deoxyadenosine + H2O + H(+) = 2'-deoxyinosine + NH4(+). Catalyzes the hydrolytic deamination of adenosine and 2-deoxyadenosine. The sequence is that of Adenosine deaminase from Shewanella putrefaciens (strain CN-32 / ATCC BAA-453).